Consider the following 341-residue polypeptide: Anthranilate phosphoribosyltransferase (341 aa).

Residues Gly-80, 83–84 (GD), Thr-88, 90–93 (NIST), 108–116 (KHGNRAMSS), and Ser-120 each bind 5-phospho-alpha-D-ribose 1-diphosphate. Position 80 (Gly-80) interacts with anthranilate. Ser-92 lines the Mg(2+) pocket. Residue Asn-111 coordinates anthranilate. Residue Arg-166 coordinates anthranilate. Residues Asp-225 and Glu-226 each coordinate Mg(2+).

It belongs to the anthranilate phosphoribosyltransferase family. In terms of assembly, homodimer. Requires Mg(2+) as cofactor.

The catalysed reaction is N-(5-phospho-beta-D-ribosyl)anthranilate + diphosphate = 5-phospho-alpha-D-ribose 1-diphosphate + anthranilate. It functions in the pathway amino-acid biosynthesis; L-tryptophan biosynthesis; L-tryptophan from chorismate: step 2/5. Functionally, catalyzes the transfer of the phosphoribosyl group of 5-phosphorylribose-1-pyrophosphate (PRPP) to anthranilate to yield N-(5'-phosphoribosyl)-anthranilate (PRA). The polypeptide is Anthranilate phosphoribosyltransferase (Roseiflexus sp. (strain RS-1)).